The primary structure comprises 334 residues: Trans-O-hydroxybenzylidenepyruvate hydratase-aldolase (334 aa).

This sequence belongs to the DapA family.

It carries out the reaction (3E)-4-(2-hydroxyphenyl)-2-oxobut-3-enoate + H2O = salicylaldehyde + pyruvate. It functions in the pathway aromatic compound metabolism; naphthalene degradation. Functionally, involved in the naphthalene upper catabolic pathway. Catalyzes the transformation of trans-O-hydroxybenzylidenepyruvate (THBPA) to salicylaldehyde and pyruvate. The reaction is reversible. This is Trans-O-hydroxybenzylidenepyruvate hydratase-aldolase (pahE) from Pseudomonas aeruginosa.